A 204-amino-acid chain; its full sequence is Ras-related protein Rab-7L1 (204 aa).

Residues S33, K34, H35, Y36, K37, and T39 each coordinate GTP. The Effector region signature appears at 36 to 44 (YKSTVGVDF). The residue at position 71 (T71) is a Phosphothreonine; by LRRK2. S72 bears the Phosphoserine mark. The GTP site is built by K126, V156, and K157. Residues C203 and C204 are each lipidated (S-geranylgeranyl cysteine).

Belongs to the small GTPase superfamily. Rab family. In terms of assembly, interacts with LRRK2 (via the N-terminus); this interaction is direct and stimulates kinase activity. In terms of tissue distribution, expressed predominantly in kidney and much less in brain, heart, muscle, fat, liver, spleen, adrenal gland, ovary, thymus and lung. Not expressed in testis and intestine.

It is found in the cell membrane. Its subcellular location is the cytoplasm. The protein localises to the perinuclear region. It localises to the golgi apparatus. The protein resides in the golgi apparatus membrane. It is found in the trans-Golgi network. Its subcellular location is the cytoskeleton. Its function is as follows. The small GTPases Rab are key regulators in vesicle trafficking. Essential for maintaining the integrity of endosome-trans-Golgi network structure. Together with LRRK2, plays a role in the retrograde trafficking pathway for recycling proteins, such as mannose 6 phosphate receptor (M6PR), between lysosomes and the Golgi apparatus in a retromer-dependent manner. Recruits LRRK2 to the Golgi apparatus and stimulates LRRK2 kinase activity. Stimulates phosphorylation of RAB10 'Thr-73' by LRRK2. Regulates also neuronal process morphology in the intact central nervous system (CNS). This is Ras-related protein Rab-7L1 (Rab29) from Rattus norvegicus (Rat).